We begin with the raw amino-acid sequence, 332 residues long: Alanine racemase (332 aa).

The Proton acceptor; specific for D-alanine role is filled by lysine 33. At lysine 33 the chain carries N6-(pyridoxal phosphate)lysine. Substrate is bound at residue arginine 115. Residue tyrosine 245 is the Proton acceptor; specific for L-alanine of the active site. Methionine 286 contacts substrate.

The protein belongs to the alanine racemase family. Requires pyridoxal 5'-phosphate as cofactor.

The enzyme catalyses L-alanine = D-alanine. It participates in amino-acid biosynthesis; D-alanine biosynthesis; D-alanine from L-alanine: step 1/1. Functionally, catalyzes the interconversion of L-alanine and D-alanine. May also act on other amino acids. This chain is Alanine racemase (alr), found in Nitratiruptor sp. (strain SB155-2).